Consider the following 552-residue polypeptide: Putative phosphate permease MT2339 (552 aa).

The next 13 membrane-spanning stretches (helical) occupy residues 38-58 (WHLS…WWAF), 69-89 (ILVL…GNDV), 107-127 (ALLV…GDVT), 146-166 (DFMN…LFAN), 178-198 (IIGG…QGGA), 213-233 (VSWV…YGVI), 326-346 (VPLV…FKGF), 360-380 (FIIA…AKTL), 389-409 (TFLM…FSHG), 437-457 (AVPA…LWFI), 472-492 (MHPA…MGAT), 493-513 (VLGL…GVGI), and 526-546 (IVLA…VGLV).

It belongs to the inorganic phosphate transporter (PiT) (TC 2.A.20) family.

The protein resides in the cell membrane. In terms of biological role, potential transporter for phosphate. In Mycobacterium tuberculosis (strain CDC 1551 / Oshkosh), this protein is Putative phosphate permease MT2339.